Reading from the N-terminus, the 215-residue chain is Protein LURP-one-related 4 (215 aa).

It belongs to the LOR family.

Its function is as follows. Might be related to the phospholipid scramblase and tubby-like superfamily of membrane tethered transcription factors. The polypeptide is Protein LURP-one-related 4 (Arabidopsis thaliana (Mouse-ear cress)).